The sequence spans 165 residues: Fimbrial protein (165 aa).

The signal sequence occupies residues 1-21; the sequence is MRKSASAVAVLALIACGSAHA.

The protein localises to the fimbrium. Functionally, structural subunit of the sef14 fimbriae. The chain is Fimbrial protein (sefA) from Salmonella enteritidis.